The chain runs to 248 residues: Anamorsin homolog (248 aa).

Positions 4–129 (FKGLQKTLYI…ETGSSARLSF (126 aa)) are N-terminal SAM-like domain. A linker region spans residues 130 to 161 (AKKDASALNVWKISGDDEELIDEEDLLDEEDK). [2Fe-2S] cluster-binding residues include cysteine 172, cysteine 181, cysteine 184, and cysteine 186. Residues 172-186 (CSTTGKRKACKNCSC) are fe-S binding site A. The [4Fe-4S] cluster site is built by cysteine 209, cysteine 212, cysteine 220, and cysteine 223. 2 consecutive short sequence motifs (cx2C motif) follow at residues 209–212 (CGNC) and 220–223 (CSTC). Residues 209 to 223 (CGNCYLGDAFRCSTC) are fe-S binding site B.

The protein belongs to the anamorsin family. Monomer. The cofactor is [2Fe-2S] cluster. Requires [4Fe-4S] cluster as cofactor.

Its subcellular location is the cytoplasm. The protein resides in the mitochondrion intermembrane space. Its function is as follows. Component of the cytosolic iron-sulfur (Fe-S) protein assembly (CIA) machinery. Required for the maturation of extramitochondrial Fe-S proteins. Part of an electron transfer chain functioning in an early step of cytosolic Fe-S biogenesis, facilitating the de novo assembly of a [4Fe-4S] cluster on the cytosolic Fe-S scaffold complex. Electrons are transferred from NADPH via a FAD- and FMN-containing diflavin oxidoreductase. Together with the diflavin oxidoreductase, also required for the assembly of the diferric tyrosyl radical cofactor of ribonucleotide reductase (RNR), probably by providing electrons for reduction during radical cofactor maturation in the catalytic small subunit. The sequence is that of Anamorsin homolog from Drosophila ananassae (Fruit fly).